The chain runs to 242 residues: 7-cyano-7-deazaguanine synthase (242 aa).

Residues 1-22 form a disordered region; the sequence is MNSSSNEKNKDLNRKNFSSKTD. An ATP-binding site is contributed by 32-42; it reads LSGGLDSTTCL. Positions 212, 221, 224, and 227 each coordinate Zn(2+).

Belongs to the QueC family. Zn(2+) is required as a cofactor.

It carries out the reaction 7-carboxy-7-deazaguanine + NH4(+) + ATP = 7-cyano-7-deazaguanine + ADP + phosphate + H2O + H(+). Its pathway is purine metabolism; 7-cyano-7-deazaguanine biosynthesis. Functionally, catalyzes the ATP-dependent conversion of 7-carboxy-7-deazaguanine (CDG) to 7-cyano-7-deazaguanine (preQ(0)). The chain is 7-cyano-7-deazaguanine synthase from Leptospira interrogans serogroup Icterohaemorrhagiae serovar copenhageni (strain Fiocruz L1-130).